Consider the following 634-residue polypeptide: Biosynthetic arginine decarboxylase (634 aa).

K103 carries the N6-(pyridoxal phosphate)lysine modification. Residue 283–293 (FDVGGGLGVDY) coordinates substrate.

It belongs to the Orn/Lys/Arg decarboxylase class-II family. SpeA subfamily. The cofactor is Mg(2+). Requires pyridoxal 5'-phosphate as cofactor.

The enzyme catalyses L-arginine + H(+) = agmatine + CO2. It participates in amine and polyamine biosynthesis; agmatine biosynthesis; agmatine from L-arginine: step 1/1. In terms of biological role, catalyzes the biosynthesis of agmatine from arginine. This Photorhabdus laumondii subsp. laumondii (strain DSM 15139 / CIP 105565 / TT01) (Photorhabdus luminescens subsp. laumondii) protein is Biosynthetic arginine decarboxylase.